Here is a 106-residue protein sequence, read N- to C-terminus: ATP-dependent Clp protease adapter protein ClpS (106 aa).

Residues 1 to 13 show a composition bias toward polar residues; sequence MGNNSTWSQSENL. The segment at 1-21 is disordered; sequence MGNNSTWSQSENLTADKQKEK.

The protein belongs to the ClpS family. Binds to the N-terminal domain of the chaperone ClpA.

Functionally, involved in the modulation of the specificity of the ClpAP-mediated ATP-dependent protein degradation. The chain is ATP-dependent Clp protease adapter protein ClpS from Pectobacterium carotovorum subsp. carotovorum (strain PC1).